Consider the following 258-residue polypeptide: Acyl-[acyl-carrier-protein]--UDP-N-acetylglucosamine O-acyltransferase (258 aa).

The protein belongs to the transferase hexapeptide repeat family. LpxA subfamily. In terms of assembly, homotrimer.

The protein resides in the cytoplasm. It catalyses the reaction a (3R)-hydroxyacyl-[ACP] + UDP-N-acetyl-alpha-D-glucosamine = a UDP-3-O-[(3R)-3-hydroxyacyl]-N-acetyl-alpha-D-glucosamine + holo-[ACP]. The protein operates within glycolipid biosynthesis; lipid IV(A) biosynthesis; lipid IV(A) from (3R)-3-hydroxytetradecanoyl-[acyl-carrier-protein] and UDP-N-acetyl-alpha-D-glucosamine: step 1/6. Involved in the biosynthesis of lipid A, a phosphorylated glycolipid that anchors the lipopolysaccharide to the outer membrane of the cell. In Pseudomonas fluorescens (strain ATCC BAA-477 / NRRL B-23932 / Pf-5), this protein is Acyl-[acyl-carrier-protein]--UDP-N-acetylglucosamine O-acyltransferase.